Reading from the N-terminus, the 364-residue chain is Chorismate synthase (364 aa).

NADP(+) is bound by residues Arg-48 and Arg-54. Residues 125–127 (RSS), 238–239 (NA), Gly-278, 293–297 (KPTSS), and Arg-319 each bind FMN.

It belongs to the chorismate synthase family. As to quaternary structure, homotetramer. FMNH2 serves as cofactor.

It carries out the reaction 5-O-(1-carboxyvinyl)-3-phosphoshikimate = chorismate + phosphate. It functions in the pathway metabolic intermediate biosynthesis; chorismate biosynthesis; chorismate from D-erythrose 4-phosphate and phosphoenolpyruvate: step 7/7. Catalyzes the anti-1,4-elimination of the C-3 phosphate and the C-6 proR hydrogen from 5-enolpyruvylshikimate-3-phosphate (EPSP) to yield chorismate, which is the branch point compound that serves as the starting substrate for the three terminal pathways of aromatic amino acid biosynthesis. This reaction introduces a second double bond into the aromatic ring system. The sequence is that of Chorismate synthase from Shewanella sediminis (strain HAW-EB3).